A 388-amino-acid polypeptide reads, in one-letter code: Succinate--CoA ligase [ADP-forming] subunit beta (388 aa).

The 236-residue stretch at 9 to 244 folds into the ATP-grasp domain; sequence KEILRKFGVA…LDEEDPAEIE (236 aa). Residues Lys-46, 53–55, Glu-99, Ala-102, and Glu-107 contribute to the ATP site; that span reads GRG. Residues Asn-199 and Asp-213 each contribute to the Mg(2+) site. Substrate is bound by residues Asn-264 and 321–323; that span reads GIM.

It belongs to the succinate/malate CoA ligase beta subunit family. As to quaternary structure, heterotetramer of two alpha and two beta subunits. Mg(2+) is required as a cofactor.

It carries out the reaction succinate + ATP + CoA = succinyl-CoA + ADP + phosphate. The enzyme catalyses GTP + succinate + CoA = succinyl-CoA + GDP + phosphate. Its pathway is carbohydrate metabolism; tricarboxylic acid cycle; succinate from succinyl-CoA (ligase route): step 1/1. Its function is as follows. Succinyl-CoA synthetase functions in the citric acid cycle (TCA), coupling the hydrolysis of succinyl-CoA to the synthesis of either ATP or GTP and thus represents the only step of substrate-level phosphorylation in the TCA. The beta subunit provides nucleotide specificity of the enzyme and binds the substrate succinate, while the binding sites for coenzyme A and phosphate are found in the alpha subunit. This chain is Succinate--CoA ligase [ADP-forming] subunit beta, found in Burkholderia multivorans (strain ATCC 17616 / 249).